The chain runs to 366 residues: Chorismate synthase (366 aa).

NADP(+) contacts are provided by Arg48 and Arg54. FMN-binding positions include 125–127 (RSS), 237–238 (NA), Gly277, 292–296 (KPTSS), and Arg318.

The protein belongs to the chorismate synthase family. Homotetramer. FMNH2 serves as cofactor.

It catalyses the reaction 5-O-(1-carboxyvinyl)-3-phosphoshikimate = chorismate + phosphate. The protein operates within metabolic intermediate biosynthesis; chorismate biosynthesis; chorismate from D-erythrose 4-phosphate and phosphoenolpyruvate: step 7/7. In terms of biological role, catalyzes the anti-1,4-elimination of the C-3 phosphate and the C-6 proR hydrogen from 5-enolpyruvylshikimate-3-phosphate (EPSP) to yield chorismate, which is the branch point compound that serves as the starting substrate for the three terminal pathways of aromatic amino acid biosynthesis. This reaction introduces a second double bond into the aromatic ring system. The protein is Chorismate synthase of Acidovorax sp. (strain JS42).